We begin with the raw amino-acid sequence, 560 residues long: Arginine--tRNA ligase (560 aa).

The 'HIGH' region signature appears at 122 to 132 (ANPNGPLHVGH).

This sequence belongs to the class-I aminoacyl-tRNA synthetase family.

Its subcellular location is the cytoplasm. The enzyme catalyses tRNA(Arg) + L-arginine + ATP = L-arginyl-tRNA(Arg) + AMP + diphosphate. In Methanosphaera stadtmanae (strain ATCC 43021 / DSM 3091 / JCM 11832 / MCB-3), this protein is Arginine--tRNA ligase.